We begin with the raw amino-acid sequence, 565 residues long: Arginine--tRNA ligase (565 aa).

A 'HIGH' region motif is present at residues 121 to 131; sequence PNIAKPMGMGH.

Belongs to the class-I aminoacyl-tRNA synthetase family. Monomer.

The protein resides in the cytoplasm. It catalyses the reaction tRNA(Arg) + L-arginine + ATP = L-arginyl-tRNA(Arg) + AMP + diphosphate. The chain is Arginine--tRNA ligase from Lactobacillus delbrueckii subsp. bulgaricus (strain ATCC BAA-365 / Lb-18).